Consider the following 476-residue polypeptide: Proline--tRNA ligase 2 (476 aa).

The protein belongs to the class-II aminoacyl-tRNA synthetase family. ProS type 3 subfamily. Homodimer.

It is found in the cytoplasm. The enzyme catalyses tRNA(Pro) + L-proline + ATP = L-prolyl-tRNA(Pro) + AMP + diphosphate. Its function is as follows. Catalyzes the attachment of proline to tRNA(Pro) in a two-step reaction: proline is first activated by ATP to form Pro-AMP and then transferred to the acceptor end of tRNA(Pro). This is Proline--tRNA ligase 2 from Bacillus thuringiensis subsp. konkukian (strain 97-27).